Here is a 215-residue protein sequence, read N- to C-terminus: Large ribosomal subunit protein uL3 (215 aa).

The interval 136–161 (GVSISHRSHGSTGQRQDPGKVFKGKK) is disordered. Gln-151 is subject to N5-methylglutamine.

This sequence belongs to the universal ribosomal protein uL3 family. In terms of assembly, part of the 50S ribosomal subunit. Forms a cluster with proteins L14 and L19. Methylated by PrmB.

Its function is as follows. One of the primary rRNA binding proteins, it binds directly near the 3'-end of the 23S rRNA, where it nucleates assembly of the 50S subunit. This Rickettsia akari (strain Hartford) protein is Large ribosomal subunit protein uL3.